A 229-amino-acid polypeptide reads, in one-letter code: N-(5'-phosphoribosyl)anthranilate isomerase (229 aa).

It belongs to the TrpF family.

It carries out the reaction N-(5-phospho-beta-D-ribosyl)anthranilate = 1-(2-carboxyphenylamino)-1-deoxy-D-ribulose 5-phosphate. It functions in the pathway amino-acid biosynthesis; L-tryptophan biosynthesis; L-tryptophan from chorismate: step 3/5. The polypeptide is N-(5'-phosphoribosyl)anthranilate isomerase (Clostridium beijerinckii (strain ATCC 51743 / NCIMB 8052) (Clostridium acetobutylicum)).